Consider the following 860-residue polypeptide: Probable leucine--tRNA ligase, cytoplasmic (860 aa).

The 'HIGH' region motif lies at 41-51; sequence PYMNGKLHLGH. The 'KMSKS' region signature appears at 552-556; sequence KMSKS. Lys555 contributes to the ATP binding site.

It belongs to the class-I aminoacyl-tRNA synthetase family.

The protein localises to the cytoplasm. The enzyme catalyses tRNA(Leu) + L-leucine + ATP = L-leucyl-tRNA(Leu) + AMP + diphosphate. The chain is Probable leucine--tRNA ligase, cytoplasmic from Enterocytozoon bieneusi (strain H348) (Microsporidian parasite).